The primary structure comprises 452 residues: Phosphoglucosamine mutase (452 aa).

Serine 105 serves as the catalytic Phosphoserine intermediate. Residues serine 105, aspartate 244, aspartate 246, and aspartate 248 each contribute to the Mg(2+) site. The residue at position 105 (serine 105) is a Phosphoserine.

Belongs to the phosphohexose mutase family. Mg(2+) is required as a cofactor. In terms of processing, activated by phosphorylation.

It carries out the reaction alpha-D-glucosamine 1-phosphate = D-glucosamine 6-phosphate. Functionally, catalyzes the conversion of glucosamine-6-phosphate to glucosamine-1-phosphate. This chain is Phosphoglucosamine mutase, found in Blochmanniella floridana.